The following is a 219-amino-acid chain: 3,4-dihydroxy-2-butanone 4-phosphate synthase (219 aa).

Residues 37–38, D42, 150–154, and E174 each bind D-ribulose 5-phosphate; these read RE and RRGHT. Residue E38 coordinates Mg(2+). H153 is a Mg(2+) binding site.

Belongs to the DHBP synthase family. Homodimer. It depends on Mg(2+) as a cofactor. The cofactor is Mn(2+).

It carries out the reaction D-ribulose 5-phosphate = (2S)-2-hydroxy-3-oxobutyl phosphate + formate + H(+). The protein operates within cofactor biosynthesis; riboflavin biosynthesis; 2-hydroxy-3-oxobutyl phosphate from D-ribulose 5-phosphate: step 1/1. Functionally, catalyzes the conversion of D-ribulose 5-phosphate to formate and 3,4-dihydroxy-2-butanone 4-phosphate. This Oleidesulfovibrio alaskensis (strain ATCC BAA-1058 / DSM 17464 / G20) (Desulfovibrio alaskensis) protein is 3,4-dihydroxy-2-butanone 4-phosphate synthase.